We begin with the raw amino-acid sequence, 183 residues long: Inner membrane-spanning protein YciB (183 aa).

A run of 5 helical transmembrane segments spans residues 22 to 44 (IYTATGALVVVTGLQLIYSWVRY), 54 to 74 (TFLLVGFFGGLTVFFHDDAFI), 76 to 96 (WKVTVINILFALGLLISRYGF), 119 to 139 (VNLAWVGFFTVCGLLNLYVAF), and 149 to 169 (FKVFGLLGMTLVFTLLSGVYL).

It belongs to the YciB family.

It localises to the cell inner membrane. Plays a role in cell envelope biogenesis, maintenance of cell envelope integrity and membrane homeostasis. In Aeromonas salmonicida (strain A449), this protein is Inner membrane-spanning protein YciB.